Here is a 269-residue protein sequence, read N- to C-terminus: tRNA pseudouridine synthase A (269 aa).

Residue Asp55 is the Nucleophile of the active site. Tyr111 serves as a coordination point for substrate.

It belongs to the tRNA pseudouridine synthase TruA family.

The enzyme catalyses uridine(38/39/40) in tRNA = pseudouridine(38/39/40) in tRNA. Its function is as follows. Formation of pseudouridine at positions 38, 39 and 40 in the anticodon stem and loop of transfer RNAs. This chain is tRNA pseudouridine synthase A, found in Methanosarcina barkeri (strain Fusaro / DSM 804).